The following is a 128-amino-acid chain: Large ribosomal subunit protein uL22 (128 aa).

The protein belongs to the universal ribosomal protein uL22 family. As to quaternary structure, part of the 50S ribosomal subunit.

This protein binds specifically to 23S rRNA; its binding is stimulated by other ribosomal proteins, e.g. L4, L17, and L20. It is important during the early stages of 50S assembly. It makes multiple contacts with different domains of the 23S rRNA in the assembled 50S subunit and ribosome. Its function is as follows. The globular domain of the protein is located near the polypeptide exit tunnel on the outside of the subunit, while an extended beta-hairpin is found that lines the wall of the exit tunnel in the center of the 70S ribosome. The polypeptide is Large ribosomal subunit protein uL22 (Prochlorococcus marinus subsp. pastoris (strain CCMP1986 / NIES-2087 / MED4)).